A 372-amino-acid chain; its full sequence is Aminomethyltransferase (372 aa).

Belongs to the GcvT family. The glycine cleavage system is composed of four proteins: P, T, L and H.

The catalysed reaction is N(6)-[(R)-S(8)-aminomethyldihydrolipoyl]-L-lysyl-[protein] + (6S)-5,6,7,8-tetrahydrofolate = N(6)-[(R)-dihydrolipoyl]-L-lysyl-[protein] + (6R)-5,10-methylene-5,6,7,8-tetrahydrofolate + NH4(+). The glycine cleavage system catalyzes the degradation of glycine. This Synechococcus elongatus (strain ATCC 33912 / PCC 7942 / FACHB-805) (Anacystis nidulans R2) protein is Aminomethyltransferase.